The following is a 307-amino-acid chain: uncharacterized protein (307 aa).

The protein to B.burgdorferi BB0340.

This is an uncharacterized protein from Treponema pallidum (strain Nichols).